The following is a 366-amino-acid chain: Carbamoyl phosphate synthase small chain (366 aa).

A CPSase region spans residues 1 to 168 (MYGILVLEDG…KETVVYSADD (168 aa)). 3 residues coordinate L-glutamine: serine 45, glycine 220, and glycine 222. The region spanning 172–363 (KCVLIDCGVK…VELGIKFKAE (192 aa)) is the Glutamine amidotransferase type-1 domain. Residue cysteine 247 is the Nucleophile of the active site. Residues leucine 248, glutamine 251, asparagine 289, glycine 291, and phenylalanine 292 each coordinate L-glutamine. Active-site residues include histidine 336 and glutamate 338.

This sequence belongs to the CarA family. In terms of assembly, composed of two chains; the small (or glutamine) chain promotes the hydrolysis of glutamine to ammonia, which is used by the large (or ammonia) chain to synthesize carbamoyl phosphate. Tetramer of heterodimers (alpha,beta)4.

The catalysed reaction is hydrogencarbonate + L-glutamine + 2 ATP + H2O = carbamoyl phosphate + L-glutamate + 2 ADP + phosphate + 2 H(+). The enzyme catalyses L-glutamine + H2O = L-glutamate + NH4(+). Its pathway is amino-acid biosynthesis; L-arginine biosynthesis; carbamoyl phosphate from bicarbonate: step 1/1. It functions in the pathway pyrimidine metabolism; UMP biosynthesis via de novo pathway; (S)-dihydroorotate from bicarbonate: step 1/3. In terms of biological role, small subunit of the glutamine-dependent carbamoyl phosphate synthetase (CPSase). CPSase catalyzes the formation of carbamoyl phosphate from the ammonia moiety of glutamine, carbonate, and phosphate donated by ATP, constituting the first step of 2 biosynthetic pathways, one leading to arginine and/or urea and the other to pyrimidine nucleotides. The small subunit (glutamine amidotransferase) binds and cleaves glutamine to supply the large subunit with the substrate ammonia. The polypeptide is Carbamoyl phosphate synthase small chain (Methanococcus maripaludis (strain C6 / ATCC BAA-1332)).